The primary structure comprises 273 residues: Probable membrane transporter protein YunE (273 aa).

Transmembrane regions (helical) follow at residues 3 to 23, 50 to 70, 81 to 101, 105 to 125, 157 to 177, 185 to 205, 222 to 242, and 251 to 271; these read FVIL…IGLG, AIGT…LAYI, LIFF…SKLF, SFSV…MLKA, VGIA…IGGG, MLLF…IIFL, WLYA…GAAI, and IVMI…YEGI.

It belongs to the 4-toluene sulfonate uptake permease (TSUP) (TC 2.A.102) family.

Its subcellular location is the cell membrane. This chain is Probable membrane transporter protein YunE (yunE), found in Bacillus subtilis (strain 168).